Reading from the N-terminus, the 212-residue chain is Adenylate kinase (212 aa).

10–15 is a binding site for ATP; it reads GAGKGT. Residues 30 to 59 form an NMP region; it reads STGDMFRAAMANQTEMGTLAKSFIDKGELV. AMP contacts are provided by residues Thr-31, Arg-36, 57-59, 86-89, and Gln-93; these read ELV and GYPR. The tract at residues 127-159 is LID; the sequence is GRIINRKTGETYHKVFNPPADYNEDDYYQREDD. Residues Arg-128 and 137-138 contribute to the ATP site; that span reads TY. AMP contacts are provided by Arg-156 and Arg-167. Residue Gln-195 coordinates ATP.

Belongs to the adenylate kinase family. Monomer.

The protein localises to the cytoplasm. The catalysed reaction is AMP + ATP = 2 ADP. The protein operates within purine metabolism; AMP biosynthesis via salvage pathway; AMP from ADP: step 1/1. Catalyzes the reversible transfer of the terminal phosphate group between ATP and AMP. Plays an important role in cellular energy homeostasis and in adenine nucleotide metabolism. The sequence is that of Adenylate kinase from Streptococcus mutans serotype c (strain ATCC 700610 / UA159).